The chain runs to 503 residues: Secreted RxLR effector protein RXLR-C08 (503 aa).

An N-terminal signal peptide occupies residues Met-1 to Ala-22. Asn-27, Asn-35, and Asn-45 each carry an N-linked (GlcNAc...) asparagine glycan. The short motif at Asp-57–Arg-60 is the dEER element. Asn-108, Asn-197, and Asn-374 each carry an N-linked (GlcNAc...) asparagine glycan.

The protein belongs to the RxLR effector family.

Its subcellular location is the secreted. It is found in the host Golgi apparatus. In terms of biological role, secreted effector that suppresses pattern-triggered immunity (PTI) in plant host. This is Secreted RxLR effector protein RXLR-C08 from Plasmopara halstedii (Downy mildew of sunflower).